The sequence spans 400 residues: Cartilage-associated protein (400 aa).

An N-terminal signal peptide occupies residues Met1–Gly25. Residues Asn86 and Asn362 are each glycosylated (N-linked (GlcNAc...) asparagine).

The protein belongs to the leprecan family. Found in articular chondrocytes. Expressed in a variety of tissues.

It is found in the secreted. It localises to the extracellular space. Its subcellular location is the extracellular matrix. Its function is as follows. Necessary for efficient 3-hydroxylation of fibrillar collagen prolyl residues. This chain is Cartilage-associated protein (Crtap), found in Mus musculus (Mouse).